Consider the following 516-residue polypeptide: NADH-quinone oxidoreductase subunit N (516 aa).

14 consecutive transmembrane segments (helical) span residues 12-32, 37-57, 81-101, 108-128, 131-151, 163-183, 213-233, 246-266, 274-294, 303-323, 341-361, 386-406, 419-439, and 491-511; these read LLPA…DLLV, VTIS…VLVG, LVAV…GPLL, VGEY…LGAA, LITL…LVGL, VTFF…AALL, VAVA…PFHA, VAAY…LAVV, ITGL…NLVA, LLAW…GALA, VAYT…VVAL, VGLA…AGLF, GAAG…AYYL, and VVLA…QLVL.

It belongs to the complex I subunit 2 family. As to quaternary structure, NDH-1 is composed of 14 different subunits. Subunits NuoA, H, J, K, L, M, N constitute the membrane sector of the complex.

The protein resides in the cell membrane. It catalyses the reaction a quinone + NADH + 5 H(+)(in) = a quinol + NAD(+) + 4 H(+)(out). Its function is as follows. NDH-1 shuttles electrons from NADH, via FMN and iron-sulfur (Fe-S) centers, to quinones in the respiratory chain. The immediate electron acceptor for the enzyme in this species is believed to be a menaquinone. Couples the redox reaction to proton translocation (for every two electrons transferred, four hydrogen ions are translocated across the cytoplasmic membrane), and thus conserves the redox energy in a proton gradient. The sequence is that of NADH-quinone oxidoreductase subunit N from Salinispora tropica (strain ATCC BAA-916 / DSM 44818 / JCM 13857 / NBRC 105044 / CNB-440).